A 145-amino-acid chain; its full sequence is Putative pre-16S rRNA nuclease (145 aa).

This sequence belongs to the YqgF nuclease family.

It localises to the cytoplasm. Functionally, could be a nuclease involved in processing of the 5'-end of pre-16S rRNA. In Pseudomonas fluorescens (strain ATCC BAA-477 / NRRL B-23932 / Pf-5), this protein is Putative pre-16S rRNA nuclease.